We begin with the raw amino-acid sequence, 375 residues long: Anhydro-N-acetylmuramic acid kinase (375 aa).

12 to 19 lines the ATP pocket; sequence GTSLDGVD.

The protein belongs to the anhydro-N-acetylmuramic acid kinase family.

It catalyses the reaction 1,6-anhydro-N-acetyl-beta-muramate + ATP + H2O = N-acetyl-D-muramate 6-phosphate + ADP + H(+). The protein operates within amino-sugar metabolism; 1,6-anhydro-N-acetylmuramate degradation. It functions in the pathway cell wall biogenesis; peptidoglycan recycling. Catalyzes the specific phosphorylation of 1,6-anhydro-N-acetylmuramic acid (anhMurNAc) with the simultaneous cleavage of the 1,6-anhydro ring, generating MurNAc-6-P. Is required for the utilization of anhMurNAc either imported from the medium or derived from its own cell wall murein, and thus plays a role in cell wall recycling. This chain is Anhydro-N-acetylmuramic acid kinase, found in Mannheimia succiniciproducens (strain KCTC 0769BP / MBEL55E).